The chain runs to 309 residues: D-alanine--D-alanine ligase (309 aa).

One can recognise an ATP-grasp domain in the interval 109-304 (KMVWAACGLP…FTALCLAILE (196 aa)). Residue 135–190 (VAELGLPIFVKPVHEGSSMGATKVTAASQLKAAWERAARFDDLVLAEEFIVGAELT) coordinates ATP. Residues aspartate 258, glutamate 271, and asparagine 273 each contribute to the Mg(2+) site.

Belongs to the D-alanine--D-alanine ligase family. It depends on Mg(2+) as a cofactor. The cofactor is Mn(2+).

The protein resides in the cytoplasm. The catalysed reaction is 2 D-alanine + ATP = D-alanyl-D-alanine + ADP + phosphate + H(+). The protein operates within cell wall biogenesis; peptidoglycan biosynthesis. Cell wall formation. The polypeptide is D-alanine--D-alanine ligase (Aromatoleum aromaticum (strain DSM 19018 / LMG 30748 / EbN1) (Azoarcus sp. (strain EbN1))).